Here is a 1203-residue protein sequence, read N- to C-terminus: DNA-directed RNA polymerase subunit beta (1203 aa).

Residues 1174–1195 (AAQEAKAAFEAEEAEKATKAEA) are compositionally biased toward basic and acidic residues. Positions 1174–1203 (AAQEAKAAFEAEEAEKATKAEATEEAAEQE) are disordered.

This sequence belongs to the RNA polymerase beta chain family. The RNAP catalytic core consists of 2 alpha, 1 beta, 1 beta' and 1 omega subunit. When a sigma factor is associated with the core the holoenzyme is formed, which can initiate transcription.

It carries out the reaction RNA(n) + a ribonucleoside 5'-triphosphate = RNA(n+1) + diphosphate. DNA-dependent RNA polymerase catalyzes the transcription of DNA into RNA using the four ribonucleoside triphosphates as substrates. The protein is DNA-directed RNA polymerase subunit beta of Streptococcus pneumoniae (strain JJA).